Here is a 203-residue protein sequence, read N- to C-terminus: MIMNGRWSFNTLAIIFILLSTAALSAHFRVCEPYSDHKGRYHFGFHCPRLSDNKTYIFCCHHNNTAFKYCCNETEFQSVMQLNLTANSDSFAHNNYTALIGVWIYGFFVMVLLALDFLYYSAMNYELCRVYLEKWGLGGRWLKQARSQWHSTVQEGELNTGPGLSQQQQLHLHHHHHHHHPRHSLRGDTQSPTLLSFQTSTAW.

Residues 1-25 form the signal peptide; it reads MIMNGRWSFNTLAIIFILLSTAALS. The Extracellular portion of the chain corresponds to 26 to 97; sequence AHFRVCEPYS…SDSFAHNNYT (72 aa). N-linked (GlcNAc...) asparagine glycans are attached at residues Asn53, Asn63, Asn72, Asn83, and Asn95. A helical transmembrane segment spans residues 98 to 118; the sequence is ALIGVWIYGFFVMVLLALDFL. The Cytoplasmic portion of the chain corresponds to 119–203; that stretch reads YYSAMNYELC…LLSFQTSTAW (85 aa). A disordered region spans residues 157–191; the sequence is ELNTGPGLSQQQQLHLHHHHHHHHPRHSLRGDTQS. Residues 161–170 show a composition bias toward low complexity; the sequence is GPGLSQQQQL. The segment covering 171-184 has biased composition (basic residues); sequence HLHHHHHHHHPRHS.

It belongs to the shisa family.

The protein localises to the membrane. The polypeptide is Protein shisa-like-1a (shisal1a) (Danio rerio (Zebrafish)).